The sequence spans 867 residues: V-set and immunoglobulin domain-containing protein 10-like (867 aa).

Residues 1-27 form the signal peptide; the sequence is MDNPQALPLFLLLASLVGILTLRASSG. Topologically, residues 28–776 are extracellular; the sequence is LQQTNFSSAF…RAGPTLSHGA (749 aa). A glycan (N-linked (GlcNAc...) asparagine) is linked at Asn32. Low complexity predominate over residues 35–45; sequence SAFSSDSKSSS. The interval 35–60 is disordered; sequence SAFSSDSKSSSQGLGVEVPSIKPPSW. 3 N-linked (GlcNAc...) asparagine glycosylation sites follow: Asn88, Asn96, and Asn144. The interval 104 to 186 is disordered; sequence LSPVSPFSET…PESKFSAETH (83 aa). Positions 137–153 are enriched in polar residues; sequence TVKTPASNISTQVSHTK. Over residues 159-170 the composition is skewed to basic and acidic residues; sequence PDSKFSPDDMDL. The span at 173 to 186 shows a compositional bias: polar residues; the sequence is SAQSPESKFSAETH. Ig-like C2-type domains are found at residues 302–394 and 402–487; these read PQLS…ADVS and PTIT…SLLN. Cys324 and Cys378 are disulfide-bonded. N-linked (GlcNAc...) asparagine glycosylation occurs at Asn423. Cys428 and Cys471 are joined by a disulfide. N-linked (GlcNAc...) asparagine glycosylation occurs at Asn487. The disordered stretch occupies residues 602–627; that stretch reads ASGCPPPSRASWAREGRPLAPGGGSR. Residues Asn641 and Asn650 are each glycosylated (N-linked (GlcNAc...) asparagine). The chain crosses the membrane as a helical span at residues 777–797; that stretch reads IAGIVLGSLLGLALLAVLLLL. The Cytoplasmic portion of the chain corresponds to 798–867; that stretch reads CICCLCRFRG…QAQTPVQLSL (70 aa).

In terms of tissue distribution, expressed in the esophagus, particularly in the suprabasilar layers of the epithelium. Expression is largely reduced in esophageal metaplasia, dysplasia, and adenocarcinoma lesions.

Its subcellular location is the membrane. The protein is V-set and immunoglobulin domain-containing protein 10-like (VSIG10L) of Homo sapiens (Human).